The primary structure comprises 465 residues: Dihydrolipoyl dehydrogenase (465 aa).

FAD is bound by residues 34–42, Lys-51, and Gly-114; that span reads EKREAGGTC. Cys-42 and Cys-47 are oxidised to a cystine. Residues 180–184, Glu-203, Val-237, and 264–267 contribute to the NAD(+) site; these read GGGVI and SIGR. The FAD site is built by Asp-307 and Ala-315. His-439 functions as the Proton acceptor in the catalytic mechanism.

This sequence belongs to the class-I pyridine nucleotide-disulfide oxidoreductase family. Requires FAD as cofactor.

The protein resides in the cytoplasm. It carries out the reaction N(6)-[(R)-dihydrolipoyl]-L-lysyl-[protein] + NAD(+) = N(6)-[(R)-lipoyl]-L-lysyl-[protein] + NADH + H(+). Functionally, the branched-chain alpha-keto dehydrogenase complex catalyzes the overall conversion of alpha-keto acids to acyl-CoA and CO(2). It contains multiple copies of 3 enzymatic components: branched-chain alpha-keto acid decarboxylase (E1), lipoamide acyltransferase (E2) and lipoamide dehydrogenase (E3). In Chlamydia trachomatis serovar D (strain ATCC VR-885 / DSM 19411 / UW-3/Cx), this protein is Dihydrolipoyl dehydrogenase (lpdA).